A 517-amino-acid polypeptide reads, in one-letter code: Zinc finger protein 215 (517 aa).

One can recognise an SCAN box domain in the interval 48–126 (RQKFRHFQYL…KDMVTLIEDV (79 aa)). In terms of domain architecture, KRAB spans 164 to 237 (VTFKDVVVEF…EKEIPRKTIF (74 aa)). 4 consecutive C2H2-type zinc fingers follow at residues 379–401 (YECY…QIIH), 407–429 (YKCS…QKLH), 462–484 (YQCV…QMIH), and 490–512 (FKCK…QKLH).

Belongs to the krueppel C2H2-type zinc-finger protein family.

It localises to the nucleus. May be involved in transcriptional regulation. The chain is Zinc finger protein 215 (ZNF215) from Homo sapiens (Human).